Reading from the N-terminus, the 146-residue chain is MADPEKIIKVSVVTPDGIVYSHNATMVAMRAIDGDRAIMYDHLPIVTPLAIGEVRVKRTHEMNDRIDHIAVNGGYIEFSNNEATIIADSAERARNIDVKRAQSAKKRAEQHMQEAKEKHNEREMLEAEIALRRAVNRLHVRENYGK.

Residues 103–122 (SAKKRAEQHMQEAKEKHNER) form a disordered region.

Belongs to the ATPase epsilon chain family. As to quaternary structure, F-type ATPases have 2 components, CF(1) - the catalytic core - and CF(0) - the membrane proton channel. CF(1) has five subunits: alpha(3), beta(3), gamma(1), delta(1), epsilon(1). CF(0) has three main subunits: a, b and c.

It is found in the cell membrane. Functionally, produces ATP from ADP in the presence of a proton gradient across the membrane. The sequence is that of ATP synthase epsilon chain from Lactobacillus johnsonii (strain CNCM I-12250 / La1 / NCC 533).